Here is a 158-residue protein sequence, read N- to C-terminus: Putative 8-oxo-dGTP diphosphatase YtkD (158 aa).

A Nudix hydrolase domain is found at 6–145; sequence DYYQNTVQLS…SFIMKDSVLP (140 aa). A Nudix box motif is present at residues 53-74; that stretch reads GKVEPMECAEEAALREVKEETG. Glu-68 and Glu-72 together coordinate Mg(2+).

It belongs to the Nudix hydrolase family. The cofactor is Mg(2+).

It catalyses the reaction 8-oxo-dGTP + H2O = 8-oxo-dGMP + diphosphate + H(+). With respect to regulation, not induced by oxidative damage (following treatment with paraquat or hydrogen peroxide). Not induced by mitomycin C. Not induced by sigma-B general stress inducers such as sodium chloride, ethanol or heat. Functionally, involved in the GO system responsible for removing an oxidatively damaged form of guanine (7,8-dihydro-8-oxoguanine, 8-oxo-dGTP) from DNA and the nucleotide pool. 8-oxo-dGTP is inserted opposite dA and dC residues of template DNA with almost equal efficiency thus leading to A.T to G.C transversions. Functions, in conjunction with MutT, to protect vegetatively growing cells from DNA-damaging agents such as H(2)O(2) or t-BHP (t-butylhydroperoxide). The 2 proteins do not however protect spores. According to PubMed:15576788, phosphohydrolase that catalyzes the hydrolysis of all common nucleoside triphosphates as well as of the mutagenic analog 8-oxo-dGTP. The high catalytic efficiency on dGTP is in contrast to results from PubMed:14761999. According to PubMed:14761999, catalyzes the hydrolysis of 8-oxo-dGTP with a specific activity 413 times higher than that exhibited against dGTP. Preferentially catalyzes the hydrolysis of 8-oxo-dGTP and 8-oxo-GTP. According to PubMed:15576788, hydrolyzes nucleoside triphosphates in a stepwise fashion through the diphosphate to the monophosphate, releasing two molecules of inorganic orthophosphate. This is Putative 8-oxo-dGTP diphosphatase YtkD (ytkD) from Bacillus subtilis (strain 168).